The following is a 126-amino-acid chain: Protein ApaG (126 aa).

One can recognise an ApaG domain in the interval 2–126 (SDTQHQVNVR…FRLAVPGALH (125 aa)).

This is Protein ApaG from Pseudomonas aeruginosa (strain LESB58).